The primary structure comprises 275 residues: NH(3)-dependent NAD(+) synthetase (275 aa).

An ATP-binding site is contributed by 47–54; the sequence is GISGGQDS. Aspartate 53 serves as a coordination point for Mg(2+). Residue arginine 141 coordinates deamido-NAD(+). Threonine 161 contacts ATP. Glutamate 166 contacts Mg(2+). Deamido-NAD(+)-binding residues include lysine 174 and aspartate 181. ATP-binding residues include lysine 190 and threonine 212. Position 261 to 262 (261 to 262) interacts with deamido-NAD(+); sequence HK.

This sequence belongs to the NAD synthetase family. Homodimer.

It carries out the reaction deamido-NAD(+) + NH4(+) + ATP = AMP + diphosphate + NAD(+) + H(+). It functions in the pathway cofactor biosynthesis; NAD(+) biosynthesis; NAD(+) from deamido-NAD(+) (ammonia route): step 1/1. Catalyzes the ATP-dependent amidation of deamido-NAD to form NAD. Uses ammonia as a nitrogen source. This Lacticaseibacillus paracasei (strain ATCC 334 / BCRC 17002 / CCUG 31169 / CIP 107868 / KCTC 3260 / NRRL B-441) (Lactobacillus paracasei) protein is NH(3)-dependent NAD(+) synthetase.